A 135-amino-acid polypeptide reads, in one-letter code: Large ribosomal subunit protein bL12c (135 aa).

The protein belongs to the bacterial ribosomal protein bL12 family. Homodimer. Part of the ribosomal stalk of the 50S ribosomal subunit. Forms a multimeric L10(L12)X complex, where L10 forms an elongated spine to which 2 to 4 L12 dimers bind in a sequential fashion. Binds GTP-bound translation factors.

The protein resides in the plastid. The protein localises to the chloroplast. Functionally, forms part of the ribosomal stalk which helps the ribosome interact with GTP-bound translation factors. Is thus essential for accurate translation. The protein is Large ribosomal subunit protein bL12c of Chara vulgaris (Common stonewort).